The sequence spans 354 residues: UDP-2,3-diacetamido-2,3-dideoxy-D-glucuronate 2-epimerase (354 aa).

The protein belongs to the UDP-N-acetylglucosamine 2-epimerase family.

It carries out the reaction UDP-2,3-diacetamido-2,3-dideoxy-alpha-D-glucuronate = UDP-2,3-diacetamido-2,3-dideoxy-alpha-D-mannuronate. The protein operates within bacterial outer membrane biogenesis; LPS O-antigen biosynthesis. Functionally, plays a role in the biosynthesis of B-band O antigen for serotype O5. Catalyzes the epimerization of UDP-2,3-diacetamido-2,3-dideoxy-alpha-D-glucuronic acid (UDP-alpha-D-GlcNAc3NAcA) to UDP-2,3-diacetamido-2,3-dideoxy-alpha-D-mannuronic acid (UDP-alpha-D-ManNAc3NAcA). Exhibits high specificity towards the substrate as UDP-alpha-D-GlcNAc, UDP-alpha-D-GlcNAcA (UDP-2-acetamido-2-deoxy-alpha-D-glucuronic acid) and UDP-alpha-D-GlcNAc3NAc (UDP-2,3-diacetamido-2,3-dideoxy-alpha-D-glucose) cannot act as substrates. The chain is UDP-2,3-diacetamido-2,3-dideoxy-D-glucuronate 2-epimerase from Pseudomonas aeruginosa (strain ATCC 15692 / DSM 22644 / CIP 104116 / JCM 14847 / LMG 12228 / 1C / PRS 101 / PAO1).